Consider the following 133-residue polypeptide: Ribonuclease P protein component (133 aa).

It belongs to the RnpA family. In terms of assembly, consists of a catalytic RNA component (M1 or rnpB) and a protein subunit.

It carries out the reaction Endonucleolytic cleavage of RNA, removing 5'-extranucleotides from tRNA precursor.. Functionally, RNaseP catalyzes the removal of the 5'-leader sequence from pre-tRNA to produce the mature 5'-terminus. It can also cleave other RNA substrates such as 4.5S RNA. The protein component plays an auxiliary but essential role in vivo by binding to the 5'-leader sequence and broadening the substrate specificity of the ribozyme. The protein is Ribonuclease P protein component of Pseudomonas putida (strain ATCC 47054 / DSM 6125 / CFBP 8728 / NCIMB 11950 / KT2440).